The following is a 361-amino-acid chain: Cobalt-precorrin-5B C(1)-methyltransferase (361 aa).

Belongs to the CbiD family.

The enzyme catalyses Co-precorrin-5B + S-adenosyl-L-methionine = Co-precorrin-6A + S-adenosyl-L-homocysteine. It functions in the pathway cofactor biosynthesis; adenosylcobalamin biosynthesis; cob(II)yrinate a,c-diamide from sirohydrochlorin (anaerobic route): step 6/10. Its function is as follows. Catalyzes the methylation of C-1 in cobalt-precorrin-5B to form cobalt-precorrin-6A. The protein is Cobalt-precorrin-5B C(1)-methyltransferase of Methanobrevibacter smithii (strain ATCC 35061 / DSM 861 / OCM 144 / PS).